Here is a 236-residue protein sequence, read N- to C-terminus: THO complex subunit 7B (236 aa).

A coiled-coil region spans residues 99-228 (EANLREKESF…IRSASEDQRN (130 aa)).

It belongs to the THOC7 family. In terms of assembly, component of the THO complex, which is composed of THO1, THO2, THO3, THO5, THO6 and THO7.

The protein resides in the nucleus. Its function is as follows. Acts as a component of the THO subcomplex of the TREX complex which is thought to couple mRNA transcription, processing and nuclear export. The protein is THO complex subunit 7B (THO7B) of Arabidopsis thaliana (Mouse-ear cress).